The chain runs to 371 residues: Ferredoxin--NADP reductase, apicoplast (371 aa).

The transit peptide at methionine 1–cysteine 18 directs the protein to the apicoplast. Residues lysine 68, alanine 155 to serine 159, alanine 172 to glutamate 179, tyrosine 192 to serine 194, and threonine 235 contribute to the FAD site. One can recognise an FAD-binding FR-type domain in the interval lysine 68–proline 218. Residue lysine 174 participates in NADP(+) binding. NADP(+) contacts are provided by residues valine 272–tyrosine 273, serine 302, tyrosine 313–glutamine 315, and histidine 341–serine 343. Lysine 342 and tyrosine 371 together coordinate FAD.

Belongs to the ferredoxin--NADP reductase type 1 family. Monomer. Homodimer; disulfide linked. NADP binding accelerates formation of an inactive, disulfide-linked homodimer when the protein is exposed to air for 24 hours or more (in vitro); the physiological relevance of this is uncertain. It depends on FAD as a cofactor.

It localises to the plastid. The protein localises to the apicoplast. It carries out the reaction 2 reduced [2Fe-2S]-[ferredoxin] + NADP(+) + H(+) = 2 oxidized [2Fe-2S]-[ferredoxin] + NADPH. In terms of biological role, may play a role in the terminal step of the DOXP/MEP pathway for isoprenoid precursor biosynthesis. This chain is Ferredoxin--NADP reductase, apicoplast, found in Plasmodium falciparum (isolate 3D7).